Reading from the N-terminus, the 362-residue chain is Protein-glutamate methylesterase/protein-glutamine glutaminase 1 (362 aa).

The region spanning R10–E127 is the Response regulatory domain. Residue D61 is modified to 4-aspartylphosphate. Positions P163–I357 constitute a CheB-type methylesterase domain. Catalysis depends on residues S181, H208, and D306.

It belongs to the CheB family. Post-translationally, phosphorylated by CheA. Phosphorylation of the N-terminal regulatory domain activates the methylesterase activity.

Its subcellular location is the cytoplasm. It catalyses the reaction [protein]-L-glutamate 5-O-methyl ester + H2O = L-glutamyl-[protein] + methanol + H(+). The enzyme catalyses L-glutaminyl-[protein] + H2O = L-glutamyl-[protein] + NH4(+). In terms of biological role, involved in chemotaxis. Part of a chemotaxis signal transduction system that modulates chemotaxis in response to various stimuli. Catalyzes the demethylation of specific methylglutamate residues introduced into the chemoreceptors (methyl-accepting chemotaxis proteins or MCP) by CheR. Also mediates the irreversible deamidation of specific glutamine residues to glutamic acid. This Geobacter sulfurreducens (strain ATCC 51573 / DSM 12127 / PCA) protein is Protein-glutamate methylesterase/protein-glutamine glutaminase 1.